A 235-amino-acid chain; its full sequence is Leucyl/phenylalanyl-tRNA--protein transferase (235 aa).

The protein belongs to the L/F-transferase family.

Its subcellular location is the cytoplasm. It carries out the reaction N-terminal L-lysyl-[protein] + L-leucyl-tRNA(Leu) = N-terminal L-leucyl-L-lysyl-[protein] + tRNA(Leu) + H(+). The catalysed reaction is N-terminal L-arginyl-[protein] + L-leucyl-tRNA(Leu) = N-terminal L-leucyl-L-arginyl-[protein] + tRNA(Leu) + H(+). The enzyme catalyses L-phenylalanyl-tRNA(Phe) + an N-terminal L-alpha-aminoacyl-[protein] = an N-terminal L-phenylalanyl-L-alpha-aminoacyl-[protein] + tRNA(Phe). Functions in the N-end rule pathway of protein degradation where it conjugates Leu, Phe and, less efficiently, Met from aminoacyl-tRNAs to the N-termini of proteins containing an N-terminal arginine or lysine. This chain is Leucyl/phenylalanyl-tRNA--protein transferase, found in Magnetococcus marinus (strain ATCC BAA-1437 / JCM 17883 / MC-1).